The chain runs to 296 residues: 4-hydroxy-tetrahydrodipicolinate synthase (296 aa).

Position 45 (Thr-45) interacts with pyruvate. The active-site Proton donor/acceptor is the Tyr-133. Lys-161 acts as the Schiff-base intermediate with substrate in catalysis. Ile-203 contributes to the pyruvate binding site.

This sequence belongs to the DapA family. Homotetramer; dimer of dimers.

It is found in the cytoplasm. It carries out the reaction L-aspartate 4-semialdehyde + pyruvate = (2S,4S)-4-hydroxy-2,3,4,5-tetrahydrodipicolinate + H2O + H(+). Its pathway is amino-acid biosynthesis; L-lysine biosynthesis via DAP pathway; (S)-tetrahydrodipicolinate from L-aspartate: step 3/4. Its function is as follows. Catalyzes the condensation of (S)-aspartate-beta-semialdehyde [(S)-ASA] and pyruvate to 4-hydroxy-tetrahydrodipicolinate (HTPA). In Idiomarina loihiensis (strain ATCC BAA-735 / DSM 15497 / L2-TR), this protein is 4-hydroxy-tetrahydrodipicolinate synthase.